The following is a 564-amino-acid chain: Periplasmic [NiFe] hydrogenase large subunit (564 aa).

4 residues coordinate Ni(2+): Cys72, Cys75, Cys543, and Cys546. Residues 550-564 (VIEPETNEILKFKVC) constitute a propeptide that is removed on maturation.

Belongs to the [NiFe]/[NiFeSe] hydrogenase large subunit family. In terms of assembly, heterodimer of a large and a small subunit. The cofactor is Ni(2+).

Its subcellular location is the periplasm. The catalysed reaction is 2 Fe(III)-[cytochrome c3] + H2 = 2 Fe(II)-[cytochrome c3] + 2 H(+). The sequence is that of Periplasmic [NiFe] hydrogenase large subunit (hydB) from Solidesulfovibrio fructosivorans (Desulfovibrio fructosivorans).